A 265-amino-acid chain; its full sequence is Hydroxyethylthiazole kinase (265 aa).

M44 serves as a coordination point for substrate. 2 residues coordinate ATP: K120 and T166. G193 lines the substrate pocket.

This sequence belongs to the Thz kinase family. Requires Mg(2+) as cofactor.

It catalyses the reaction 5-(2-hydroxyethyl)-4-methylthiazole + ATP = 4-methyl-5-(2-phosphooxyethyl)-thiazole + ADP + H(+). Its pathway is cofactor biosynthesis; thiamine diphosphate biosynthesis; 4-methyl-5-(2-phosphoethyl)-thiazole from 5-(2-hydroxyethyl)-4-methylthiazole: step 1/1. Functionally, catalyzes the phosphorylation of the hydroxyl group of 4-methyl-5-beta-hydroxyethylthiazole (THZ). In Clostridium novyi (strain NT), this protein is Hydroxyethylthiazole kinase.